Reading from the N-terminus, the 152-residue chain is Protein Smg homolog (152 aa).

The protein belongs to the Smg family.

The protein is Protein Smg homolog of Chromobacterium violaceum (strain ATCC 12472 / DSM 30191 / JCM 1249 / CCUG 213 / NBRC 12614 / NCIMB 9131 / NCTC 9757 / MK).